The primary structure comprises 559 residues: ATP synthase subunit beta-3, mitochondrial (559 aa).

Residues 1–28 (MASRRILSSLLRSSSSRSTSKSSLIGSR) show a composition bias toward low complexity. Positions 1–39 (MASRRILSSLLRSSSSRSTSKSSLIGSRNPRLLSPGPAH) are disordered. The transit peptide at 1-54 (MASRRILSSLLRSSSSRSTSKSSLIGSRNPRLLSPGPAHGAAPCGTLLGRVAEY) directs the protein to the mitochondrion. S62 carries the phosphoserine modification. 234-241 (GGAGVGKT) contributes to the ATP binding site.

It belongs to the ATPase alpha/beta chains family. In terms of assembly, F-type ATPases have 2 components, CF(1) - the catalytic core - and CF(0) - the membrane proton channel. CF(1) has five subunits: alpha(3), beta(3), gamma(1), delta(1), epsilon(1). CF(0) has three main subunits: a, b and c.

The protein localises to the mitochondrion. It is found in the mitochondrion inner membrane. The catalysed reaction is ATP + H2O + 4 H(+)(in) = ADP + phosphate + 5 H(+)(out). Its function is as follows. Mitochondrial membrane ATP synthase (F(1)F(0) ATP synthase or Complex V) produces ATP from ADP in the presence of a proton gradient across the membrane which is generated by electron transport complexes of the respiratory chain. F-type ATPases consist of two structural domains, F(1) - containing the extramembraneous catalytic core, and F(0) - containing the membrane proton channel, linked together by a central stalk and a peripheral stalk. During catalysis, ATP synthesis in the catalytic domain of F(1) is coupled via a rotary mechanism of the central stalk subunits to proton translocation. Subunits alpha and beta form the catalytic core in F(1). Rotation of the central stalk against the surrounding alpha(3)beta(3) subunits leads to hydrolysis of ATP in three separate catalytic sites on the beta subunits. This chain is ATP synthase subunit beta-3, mitochondrial, found in Arabidopsis thaliana (Mouse-ear cress).